The following is a 318-amino-acid chain: 2-methyl-6-phytyl-1,4-hydroquinone methyltransferase (318 aa).

The first 39 residues, 1–39 (MPEYLLLPAGLISLSLAIAAGLYLLTARGYQSSDSVANA), serve as a signal peptide directing secretion. Positions 97 to 106 (VLDVGCGIGG) are SAM motif I. The tract at residues 157-165 (GSFDVVWSV) is SAM motif II. The tract at residues 184 to 193 (VVKPGGILVV) is SAM motif III.

It belongs to the class I-like SAM-binding methyltransferase superfamily. gTMT family.

The catalysed reaction is 2-methyl-6-phytyl-1,4-benzene-1,4-diol + S-adenosyl-L-methionine = 2,3-dimethyl-6-phytylbenzene-1,4-diol + S-adenosyl-L-homocysteine + H(+). It catalyses the reaction 2-methyl-6-(all-trans-nonaprenyl)benzene-1,4-diol + S-adenosyl-L-methionine = plastoquinol-9 + S-adenosyl-L-homocysteine + H(+). It carries out the reaction 6-geranylgeranyl-2-methylbenzene-1,4-diol + S-adenosyl-L-methionine = 6-geranylgeranyl-2,3-dimethylbenzene-1,4-diol + S-adenosyl-L-homocysteine + H(+). It participates in cofactor biosynthesis; tocopherol biosynthesis. Involved in a key methylation step in both tocopherol (vitamin E) and plastoquinone synthesis. Catalyzes the conversion of 2-methyl-6-phytyl-1,4-hydroquinol (MPBQ) to 2,3-dimethyl-6-phytyl-1,4-hydroquinol (DMPQ, a substrate for tocopherol cyclase), and 2-methyl-6-solanyl-1,4-benzoquinol (MSBQ) to plastoquinol. The polypeptide is 2-methyl-6-phytyl-1,4-hydroquinone methyltransferase (Synechocystis sp. (strain ATCC 27184 / PCC 6803 / Kazusa)).